We begin with the raw amino-acid sequence, 232 residues long: Flagellar L-ring protein (232 aa).

Residues 1-21 (MQKYALHAYPVMALMVATLTG) form the signal peptide. Residue cysteine 22 is the site of N-palmitoyl cysteine attachment. Cysteine 22 is lipidated: S-diacylglycerol cysteine.

It belongs to the FlgH family. The basal body constitutes a major portion of the flagellar organelle and consists of four rings (L,P,S, and M) mounted on a central rod.

Its subcellular location is the cell outer membrane. The protein localises to the bacterial flagellum basal body. In terms of biological role, assembles around the rod to form the L-ring and probably protects the motor/basal body from shearing forces during rotation. This chain is Flagellar L-ring protein, found in Salmonella gallinarum (strain 287/91 / NCTC 13346).